The primary structure comprises 322 residues: Ferric-anguibactin-binding protein FatB (322 aa).

The N-terminal stretch at 1–22 (MFKSTLNIAVAIVCSSLVTLTG) is a signal peptide. A lipid anchor (N-palmitoyl cysteine) is attached at Cys23. A lipid anchor (S-diacylglycerol cysteine) is attached at Cys23. Residues 57–322 (RVAALDMNEV…IDDIIKGYQS (266 aa)) enclose the Fe/B12 periplasmic-binding domain.

Belongs to the bacterial solute-binding protein 8 family. As to quaternary structure, part of an iron transport system composed of the outer membrane receptor FatA, the periplasmic binding protein FatB and the inner membrane proteins FatC and FatD.

The protein localises to the cell inner membrane. In terms of biological role, involved in the uptake of iron in complex with the siderophore anguibactin. Binds ferric-anguibactin in the periplasm and mediates its transport into the cytoplasm. The chain is Ferric-anguibactin-binding protein FatB from Vibrio anguillarum (strain ATCC 68554 / 775) (Listonella anguillarum).